The primary structure comprises 359 residues: Chorismate synthase (359 aa).

NADP(+) is bound at residue arginine 47. FMN contacts are provided by residues 123-125 (RSS), glycine 283, 298-302 (KPTSS), and arginine 326.

It belongs to the chorismate synthase family. Homotetramer. FMNH2 serves as cofactor.

The enzyme catalyses 5-O-(1-carboxyvinyl)-3-phosphoshikimate = chorismate + phosphate. Its pathway is metabolic intermediate biosynthesis; chorismate biosynthesis; chorismate from D-erythrose 4-phosphate and phosphoenolpyruvate: step 7/7. Catalyzes the anti-1,4-elimination of the C-3 phosphate and the C-6 proR hydrogen from 5-enolpyruvylshikimate-3-phosphate (EPSP) to yield chorismate, which is the branch point compound that serves as the starting substrate for the three terminal pathways of aromatic amino acid biosynthesis. This reaction introduces a second double bond into the aromatic ring system. The sequence is that of Chorismate synthase from Chlamydia abortus (strain DSM 27085 / S26/3) (Chlamydophila abortus).